The following is a 348-amino-acid chain: Protein RecA (348 aa).

Residue 64–71 (GPESSGKT) participates in ATP binding.

This sequence belongs to the RecA family. In terms of assembly, monomer; forms higher-order oligomers. Interacts with RecU. Interacts with DprA (smf). Interacts with RecD2.

It localises to the cytoplasm. The protein resides in the nucleoid. In terms of biological role, multifunctional protein involved in homologous recombination, DNA repair and competence. Can catalyze the hydrolysis of (d)ATP in the presence of single-stranded (ss)DNA; prefers dATP at least in vitro, catalyzes the dATP-dependent uptake of ssDNA by duplex DNA, and the dATP-dependent hybridization of homologous ssDNA (strand exchange). RecA-ATP cannot catalyze homologous DNA strand exchange; SsbA and DprA activate strand exchange by RecA-ATP. It interacts with LexA causing its activation and leading to its autocatalytic cleavage. Hydrolysis of ATP in the presence of ssDNA is partially inhibited by RecU. Required for DNA transformation; protects transforming DNA from degradation, possibly in combination with DprA. Blocks replication of both leading and lagging strand DNA in the presence of RecO and SsbA; RecD2 is able to overcome this blockage. Functionally, recruited to repair centers (RCs), foci that are the site of double-stranded DNA break(s), after RecN. Concomitant with the appearance of RecO at the RCs, RecA forms threads that extend from RCs toward the opposite cell half, possibly searching for sequence homology along the sister chromosome. The threads disappear after about 2 hours. Thread formation is absolutely dependent on RecJ or AadAB. Thread formation is also dependent on RarA. The sequence is that of Protein RecA from Bacillus subtilis (strain 168).